The primary structure comprises 237 residues: MNVNYLNDSDLDFLQHCSEEQLANFARLLTHNEKGKTRLSSVLMRNELFKSMEGHPEQHRRNWQLIAGELQHFGGDSIANKLRGHGKLYRAILLDVSKRLKLKADKEMSTFEIEQQLLEQFLRNTWKKMDEEHKQEFLHAVDARVNELEELLPLLMKDKLLAKGVSHLLSSQLTRILRTHAAMSVLGHGLLRGAGLGGPVGAALNGVKAVSGSAYRVTIPAVLQIACLRRMVSATQV.

This sequence belongs to the UPF0174 family.

The protein is UPF0174 protein YaaW (yaaW) of Escherichia coli (strain K12).